The sequence spans 550 residues: Arginine--tRNA ligase (550 aa).

The 'HIGH' region signature appears at 130-140 (ANPTGPIHLGG).

Belongs to the class-I aminoacyl-tRNA synthetase family. Monomer.

It is found in the cytoplasm. The enzyme catalyses tRNA(Arg) + L-arginine + ATP = L-arginyl-tRNA(Arg) + AMP + diphosphate. The polypeptide is Arginine--tRNA ligase (Corynebacterium diphtheriae (strain ATCC 700971 / NCTC 13129 / Biotype gravis)).